A 193-amino-acid chain; its full sequence is MDKKEYCYYCFEVVAATLEHRKVRDKWNAKSWTRSIPLFVKFASGKGHDKQLRGCIGTFRARPLVTNLTYFSKQAAFCDERFRPISLGELALLECQIDLLVDFEPIDDPLDWEVGIHGVSIKFTANGIRYSSTYLPSVAAEQRWDQEETLESLIHKAGYYGSIRSLQITATRYKSLEIGCTYEEYLHNLELLG.

The AMMECR1 domain maps to 1–189 (MDKKEYCYYC…CTYEEYLHNL (189 aa)).

This is an uncharacterized protein from Schizosaccharomyces pombe (strain 972 / ATCC 24843) (Fission yeast).